The chain runs to 464 residues: MKPVRTRFAPSPTGYLHIGGARTALFSWAYARRHGGDFILRIEDTDVARSTPEAVQAILDGMQWLGLEHDEGPFYQMQRMDRYKEVIQQMLANGSAYYCYTTREELDALRAEQEAKKEKPRYDGRWRPEAGKALPVPPTDVPPVIRFKNPQGGVVAWDDQVKGRIEFANTELDDLIIARADGTPTYNFCVCVDDWDMGITHVIRGDDHVNNTPRQINILKALGAEVPTYAHLSMILGDDGAKLSKRHGAVSVMQYDEEGFLTEAVINYLARLGWSHGDDEVFSRQQFVEWFDLDHITASAAQFNTEKLLWLNQHYMKQLPPAELAAKVQARLTARGVDTANGPDLEKAVVLYVDRSNTLNVLADAVEVFYAHVTPNPELLAQHLADDARPALAEFAAGIATVTWEAPAINALIKETVTKHGLKMPKLAMPLRVILTGQAQTPAVDAVIALIGRDKVAATLAAYL.

A 'HIGH' region motif is present at residues 10–20 (PSPTGYLHIGG). The span at 113–130 (QEAKKEKPRYDGRWRPEA) shows a compositional bias: basic and acidic residues. The disordered stretch occupies residues 113 to 142 (QEAKKEKPRYDGRWRPEAGKALPVPPTDVP). The short motif at 242–246 (KLSKR) is the 'KMSKS' region element. Position 245 (lysine 245) interacts with ATP.

Belongs to the class-I aminoacyl-tRNA synthetase family. Glutamate--tRNA ligase type 1 subfamily. As to quaternary structure, monomer.

The protein localises to the cytoplasm. The enzyme catalyses tRNA(Glu) + L-glutamate + ATP = L-glutamyl-tRNA(Glu) + AMP + diphosphate. Catalyzes the attachment of glutamate to tRNA(Glu) in a two-step reaction: glutamate is first activated by ATP to form Glu-AMP and then transferred to the acceptor end of tRNA(Glu). In Dechloromonas aromatica (strain RCB), this protein is Glutamate--tRNA ligase.